We begin with the raw amino-acid sequence, 342 residues long: Manganese-dependent ADP-ribose/CDP-alcohol diphosphatase (342 aa).

An N-acetylmethionine modification is found at Met1. The Zn(2+) site is built by Asp25, Gln27, Asp74, Asn110, His241, His278, and His280.

The protein belongs to the ADPRibase-Mn family. In terms of assembly, monomer. It depends on Mg(2+) as a cofactor.

The catalysed reaction is CDP-choline + H2O = phosphocholine + CMP + 2 H(+). The enzyme catalyses ADP-D-ribose + H2O = D-ribose 5-phosphate + AMP + 2 H(+). It catalyses the reaction CDP-glycerol + H2O = sn-glycerol 3-phosphate + CMP + 2 H(+). In terms of biological role, hydrolyzes ADP-ribose, IDP-ribose, CDP-glycerol, CDP-choline and CDP-ethanolamine, but not other non-reducing ADP-sugars or CDP-glucose. May be involved in immune cell signaling as suggested by the second-messenger role of ADP-ribose, which activates TRPM2 as a mediator of oxidative/nitrosative stress. The protein is Manganese-dependent ADP-ribose/CDP-alcohol diphosphatase (ADPRM) of Homo sapiens (Human).